A 355-amino-acid polypeptide reads, in one-letter code: 3-dehydroquinate synthase (355 aa).

Residues 71–76, 105–109, 129–130, Lys-142, Lys-151, and 169–172 each bind NAD(+); these read EGEASK, GVVGD, TS, and TLNT. Glu-184, His-246, and His-263 together coordinate Zn(2+).

It belongs to the sugar phosphate cyclases superfamily. Dehydroquinate synthase family. The cofactor is NAD(+). Co(2+) is required as a cofactor. Zn(2+) serves as cofactor.

The protein localises to the cytoplasm. The enzyme catalyses 7-phospho-2-dehydro-3-deoxy-D-arabino-heptonate = 3-dehydroquinate + phosphate. It functions in the pathway metabolic intermediate biosynthesis; chorismate biosynthesis; chorismate from D-erythrose 4-phosphate and phosphoenolpyruvate: step 2/7. Its function is as follows. Catalyzes the conversion of 3-deoxy-D-arabino-heptulosonate 7-phosphate (DAHP) to dehydroquinate (DHQ). In Streptococcus mutans serotype c (strain ATCC 700610 / UA159), this protein is 3-dehydroquinate synthase.